A 613-amino-acid chain; its full sequence is tRNA 5-methylaminomethyl-2-thiouridine biosynthesis bifunctional protein MnmC (613 aa).

The segment at 1–225 (MKKAKLIFKD…KREMIKAYLE (225 aa)) is tRNA (mnm(5)s(2)U34)-methyltransferase. Residues 252–613 (IGAGISSAVL…FLVRKLKKGL (362 aa)) form an FAD-dependent cmnm(5)s(2)U34 oxidoreductase region.

In the N-terminal section; belongs to the methyltransferase superfamily. tRNA (mnm(5)s(2)U34)-methyltransferase family. The protein in the C-terminal section; belongs to the DAO family. FAD is required as a cofactor.

Its subcellular location is the cytoplasm. The catalysed reaction is 5-aminomethyl-2-thiouridine(34) in tRNA + S-adenosyl-L-methionine = 5-methylaminomethyl-2-thiouridine(34) in tRNA + S-adenosyl-L-homocysteine + H(+). In terms of biological role, catalyzes the last two steps in the biosynthesis of 5-methylaminomethyl-2-thiouridine (mnm(5)s(2)U) at the wobble position (U34) in tRNA. Catalyzes the FAD-dependent demodification of cmnm(5)s(2)U34 to nm(5)s(2)U34, followed by the transfer of a methyl group from S-adenosyl-L-methionine to nm(5)s(2)U34, to form mnm(5)s(2)U34. The sequence is that of tRNA 5-methylaminomethyl-2-thiouridine biosynthesis bifunctional protein MnmC from Campylobacter jejuni subsp. doylei (strain ATCC BAA-1458 / RM4099 / 269.97).